A 123-amino-acid polypeptide reads, in one-letter code: uncharacterized protein (123 aa).

T56 bears the Phosphothreonine mark. Phosphoserine occurs at positions 73, 87, 97, 113, and 119.

As to expression, highly expressed in the kidney (at protein level).

The protein localises to the cytoplasm. This is an uncharacterized protein from Felis catus (Cat).